The following is a 346-amino-acid chain: Protein RecA (346 aa).

Residue 67-74 (GPESSGKT) coordinates ATP.

This sequence belongs to the RecA family.

It localises to the cytoplasm. In terms of biological role, can catalyze the hydrolysis of ATP in the presence of single-stranded DNA, the ATP-dependent uptake of single-stranded DNA by duplex DNA, and the ATP-dependent hybridization of homologous single-stranded DNAs. It interacts with LexA causing its activation and leading to its autocatalytic cleavage. The polypeptide is Protein RecA (Frankia alni (strain DSM 45986 / CECT 9034 / ACN14a)).